The sequence spans 278 residues: Undecaprenyl-diphosphatase (278 aa).

Helical transmembrane passes span 3 to 23 (YILI…IPIS), 42 to 62 (VAYS…IFYF), 88 to 108 (FLVI…LFVI), 112 to 132 (ILGL…IVIY), 152 to 172 (IIIV…RSGM), 190 to 210 (LSFI…VLFS), 225 to 245 (GLLI…NALL), and 253 to 273 (VVLL…LSDI).

Belongs to the UppP family.

The protein localises to the cell membrane. It catalyses the reaction di-trans,octa-cis-undecaprenyl diphosphate + H2O = di-trans,octa-cis-undecaprenyl phosphate + phosphate + H(+). Functionally, catalyzes the dephosphorylation of undecaprenyl diphosphate (UPP). The polypeptide is Undecaprenyl-diphosphatase (Saccharolobus solfataricus (strain ATCC 35092 / DSM 1617 / JCM 11322 / P2) (Sulfolobus solfataricus)).